The sequence spans 449 residues: GTPase Der (449 aa).

EngA-type G domains lie at 4–174 and 183–358; these read PIVA…PPKT and LRIA…VQRQ. Residues 10 to 17, 57 to 61, 126 to 129, 189 to 196, 236 to 240, and 301 to 304 contribute to the GTP site; these read GRPNVGKS, DTAGV, NKCD, DTAGI, and NKWD. The KH-like domain maps to 359-444; sequence KRVPTSELNN…PIVIVFRSRE (86 aa).

Belongs to the TRAFAC class TrmE-Era-EngA-EngB-Septin-like GTPase superfamily. EngA (Der) GTPase family. As to quaternary structure, associates with the 50S ribosomal subunit.

Functionally, GTPase that plays an essential role in the late steps of ribosome biogenesis. The protein is GTPase Der of Chloroflexus aurantiacus (strain ATCC 29366 / DSM 635 / J-10-fl).